A 177-amino-acid chain; its full sequence is Large ribosomal subunit protein uL6 (177 aa).

It belongs to the universal ribosomal protein uL6 family. In terms of assembly, part of the 50S ribosomal subunit.

Functionally, this protein binds to the 23S rRNA, and is important in its secondary structure. It is located near the subunit interface in the base of the L7/L12 stalk, and near the tRNA binding site of the peptidyltransferase center. This Rhodopseudomonas palustris (strain BisA53) protein is Large ribosomal subunit protein uL6.